We begin with the raw amino-acid sequence, 397 residues long: Acetate kinase (397 aa).

Residue Asn-7 participates in Mg(2+) binding. ATP is bound at residue Lys-14. Arg-91 contacts substrate. Asp-148 (proton donor/acceptor) is an active-site residue. ATP is bound by residues 208–212, 283–285, and 331–335; these read HLGNG, DFR, and GIGEN. Mg(2+) is bound at residue Glu-384.

This sequence belongs to the acetokinase family. In terms of assembly, homodimer. Requires Mg(2+) as cofactor. The cofactor is Mn(2+).

The protein localises to the cytoplasm. The enzyme catalyses acetate + ATP = acetyl phosphate + ADP. Its pathway is metabolic intermediate biosynthesis; acetyl-CoA biosynthesis; acetyl-CoA from acetate: step 1/2. In terms of biological role, catalyzes the formation of acetyl phosphate from acetate and ATP. Can also catalyze the reverse reaction. This is Acetate kinase from Treponema denticola (strain ATCC 35405 / DSM 14222 / CIP 103919 / JCM 8153 / KCTC 15104).